We begin with the raw amino-acid sequence, 90 residues long: Mitochondrial import inner membrane translocase subunit Tim9 (90 aa).

The short motif at 24–48 (CFNSCVNEFGSRTVSGKEESCANNC) is the Twin CX3C motif element. 2 cysteine pairs are disulfide-bonded: C24/C48 and C28/C44.

Belongs to the small Tim family. In terms of assembly, heterohexamer; composed of 3 copies of tim-9/tin-9.1 and 3 copies of tim-10/tin-10, named soluble 70 kDa complex. The complex associates with the tim-22 component of the TIM22 complex. Interacts with multi-pass transmembrane proteins in transit.

The protein resides in the mitochondrion inner membrane. In terms of biological role, mitochondrial intermembrane chaperone that participates in the import and insertion of multi-pass transmembrane proteins into the mitochondrial inner membrane. May also be required for the transfer of beta-barrel precursors from the TOM complex to the sorting and assembly machinery (SAM complex) of the outer membrane. Acts as a chaperone-like protein that protects the hydrophobic precursors from aggregation and guide them through the mitochondrial intermembrane space. The chain is Mitochondrial import inner membrane translocase subunit Tim9 (tin-9.1) from Caenorhabditis elegans.